The following is a 394-amino-acid chain: Bone morphogenetic protein 15 (394 aa).

An N-terminal signal peptide occupies residues 1 to 18; that stretch reads MVLLSILRILLLWGLVLF. A propeptide spanning residues 19-269 is cleaved from the precursor; it reads MEHRVQMTQV…DPSLLLRRAR (251 aa). Asparagine 87 and asparagine 238 each carry an N-linked (GlcNAc...) asparagine glycan. Intrachain disulfides connect cysteine 293/cysteine 359, cysteine 322/cysteine 391, and cysteine 326/cysteine 393. N-linked (GlcNAc...) asparagine glycosylation is present at asparagine 375.

It belongs to the TGF-beta family. In terms of assembly, homodimer or heterodimer (Potential). But, in contrast to other members of this family, cannot be disulfide-linked.

It localises to the secreted. May be involved in follicular development. Seems to be an oocyte-specific growth/differentiation factor that stimulates folliculogenesis and granulosa cell (GC) growth. The sequence is that of Bone morphogenetic protein 15 (BMP15) from Bos taurus (Bovine).